A 506-amino-acid polypeptide reads, in one-letter code: Bifunctional purine biosynthesis protein PurH (506 aa).

The 146-residue stretch at 1–146 (MARLALLSVS…KNFAHLTVLC (146 aa)) folds into the MGS-like domain.

The protein belongs to the PurH family.

The catalysed reaction is (6R)-10-formyltetrahydrofolate + 5-amino-1-(5-phospho-beta-D-ribosyl)imidazole-4-carboxamide = 5-formamido-1-(5-phospho-D-ribosyl)imidazole-4-carboxamide + (6S)-5,6,7,8-tetrahydrofolate. It catalyses the reaction IMP + H2O = 5-formamido-1-(5-phospho-D-ribosyl)imidazole-4-carboxamide. It functions in the pathway purine metabolism; IMP biosynthesis via de novo pathway; 5-formamido-1-(5-phospho-D-ribosyl)imidazole-4-carboxamide from 5-amino-1-(5-phospho-D-ribosyl)imidazole-4-carboxamide (10-formyl THF route): step 1/1. Its pathway is purine metabolism; IMP biosynthesis via de novo pathway; IMP from 5-formamido-1-(5-phospho-D-ribosyl)imidazole-4-carboxamide: step 1/1. The protein is Bifunctional purine biosynthesis protein PurH of Trichormus variabilis (strain ATCC 29413 / PCC 7937) (Anabaena variabilis).